Here is a 595-residue protein sequence, read N- to C-terminus: Pyranose dehydrogenase (595 aa).

The N-terminal stretch at 1 to 21 is a signal peptide; it reads MARFNARLFSIAILGFQVARS. Asparagine 95 and asparagine 110 each carry an N-linked (GlcNAc...) asparagine glycan. Histidine 123 is modified (tele-8alpha-FAD histidine). Asparagine 195, asparagine 337, asparagine 367, asparagine 502, and asparagine 510 each carry an N-linked (GlcNAc...) asparagine glycan. Histidine 530 acts as the Proton acceptor in catalysis. The N-linked (GlcNAc...) asparagine glycan is linked to asparagine 541. Residue histidine 574 is part of the active site.

The protein belongs to the GMC oxidoreductase family. In terms of assembly, monomer. FAD is required as a cofactor. N-glycosylated.

The protein resides in the secreted. The catalysed reaction is pyranose + acceptor = pyranos-2-ulose + reduced acceptor.. The enzyme catalyses pyranose + acceptor = pyranos-3-ulose + reduced acceptor.. It carries out the reaction pyranose + acceptor = pyranos-2,3-diulose + reduced acceptor.. It catalyses the reaction a pyranoside + acceptor = a pyranosid-3-ulose + reduced acceptor.. The catalysed reaction is a pyranoside + acceptor = a pyranosid-3,4-diulose + reduced acceptor.. Its function is as follows. Catalyzes the single-oxidation or sequential double oxidation reaction of carbohydrates primarily at carbon-2 and/or carbon-3 with the concomitant reduction of the flavin. The enzyme exhibits a broad sugar substrate specificity, oxidizing different aldopyranoses to the corresponding C-1, C-2, C-3 or C-1,2, C-2,3 and C-3,4 (di)dehydro sugars with substrate-specific regioselectivity. Accepts only a narrow range of electron acceptors such as substituted benzoquinones and complexed metal ions and reacts extremely slowly with O(2) as acceptor. May play a role in the natural recycling of plant matter by oxidizing all major monosaccharides in lignocellulose and by reducing quinone compounds or reactive radical species generated during lignin depolymerization. The sequence is that of Pyranose dehydrogenase from Agaricus campestris (Field mushroom).